The chain runs to 378 residues: Dihydroorotate dehydrogenase (quinone) (378 aa).

Residues 79–83 and Thr-103 each bind FMN; that span reads PGYDK. Substrate is bound at residue Lys-83. A substrate-binding site is contributed by 128–132; it reads NRMGF. Residues Asn-160 and Asn-193 each contribute to the FMN site. Position 193 (Asn-193) interacts with substrate. The Nucleophile role is filled by Ser-196. Position 198 (Asn-198) interacts with substrate. Lys-231 and Thr-259 together coordinate FMN. Position 260-261 (260-261) interacts with substrate; it reads NT. Residues Gly-289, Gly-318, and 339-340 contribute to the FMN site; that span reads YT.

The protein belongs to the dihydroorotate dehydrogenase family. Type 2 subfamily. Monomer. FMN serves as cofactor.

It is found in the cell membrane. It catalyses the reaction (S)-dihydroorotate + a quinone = orotate + a quinol. Its pathway is pyrimidine metabolism; UMP biosynthesis via de novo pathway; orotate from (S)-dihydroorotate (quinone route): step 1/1. Catalyzes the conversion of dihydroorotate to orotate with quinone as electron acceptor. The polypeptide is Dihydroorotate dehydrogenase (quinone) (Trichodesmium erythraeum (strain IMS101)).